Reading from the N-terminus, the 381-residue chain is ELMO domain-containing protein 3 (381 aa).

Residues 1–17 are compositionally biased toward basic and acidic residues; the sequence is MNENFHSFHEKELRDGQ. A disordered region spans residues 1–31; that stretch reads MNENFHSFHEKELRDGQVESVSAGSSPPCDK. The region spanning 170–324 is the ELMO domain; that stretch reads MHGRVLQTIY…DLEMSAKKSP (155 aa).

The protein localises to the cell projection. The protein resides in the stereocilium. It localises to the kinocilium. It is found in the cytoplasm. Its subcellular location is the cytoskeleton. Acts as a GTPase-activating protein (GAP) for ARL2 with low specific activity. This Bos taurus (Bovine) protein is ELMO domain-containing protein 3 (ELMOD3).